The following is a 715-amino-acid chain: Harpin secretion protein HrpI (715 aa).

Transmembrane regions (helical) follow at residues 23-43 (GAAIVMSIVFMMIIPLPTGLI), 45-65 (VLIALNICISSLLIVLAMYLP), 69-89 (AFSTFPSVLLLTTMFRLALSI), 115-135 (GNLAVGLVIFLILTVVNFLVI), 203-223 (AIAGLVIVFINMIGGFAIGVL), 241-261 (IGDGLIAQIPALLISLTAGMI), and 298-318 (MLGFALLPGMPTAVFVIISAI).

This sequence belongs to the FHIPEP (flagella/HR/invasion proteins export pore) family.

It is found in the cell inner membrane. Functionally, involved in the secretion of harpin; a proteinaceous elicitor of the hypersensitivity response in plants. The chain is Harpin secretion protein HrpI (hrpI) from Erwinia amylovora (Fire blight bacteria).